Consider the following 345-residue polypeptide: Beta-2-glycoprotein 1 (345 aa).

An N-terminal signal peptide occupies residues 1-19; it reads MPPPALVLLLGFLCHVAIA. 4 consecutive Sushi domains span residues 21-81, 82-139, 140-202, and 203-262; these read RTCP…KCMP, RVCP…VCAP, ITCP…ECRE, and VRCP…SCKA. Disulfide bonds link C23-C66, C51-C79, C84-C124, C110-C137, C142-C188, C174-C200, C205-C248, C234-C260, C264-C315, C300-C325, and C307-C345. O-linked (GalNAc...) threonine glycosylation occurs at T33. N92 carries N-linked (GlcNAc...) asparagine glycosylation. Residues N162, N183, and N193 are each glycosylated (N-linked (GlcNAc...) asparagine). N253 carries N-linked (GlcNAc...) asparagine glycosylation. A sushi-like region spans residues 263–345; it reads SCKLSIKRAT…KTDASDVKPC (83 aa).

In terms of tissue distribution, expressed by the liver and secreted in plasma.

Its subcellular location is the secreted. Binds to various kinds of negatively charged substances such as heparin, phospholipids, and dextran sulfate. May prevent activation of the intrinsic blood coagulation cascade by binding to phospholipids on the surface of damaged cells. The protein is Beta-2-glycoprotein 1 (APOH) of Bos taurus (Bovine).